Reading from the N-terminus, the 193-residue chain is Potassium-transporting ATPase KdpC subunit (193 aa).

A helical transmembrane segment spans residues 14-34 (ITFTFLVLCGLVYPLIVTGIA).

It belongs to the KdpC family. In terms of assembly, the system is composed of three essential subunits: KdpA, KdpB and KdpC.

It localises to the cell membrane. Its function is as follows. Part of the high-affinity ATP-driven potassium transport (or Kdp) system, which catalyzes the hydrolysis of ATP coupled with the electrogenic transport of potassium into the cytoplasm. This subunit acts as a catalytic chaperone that increases the ATP-binding affinity of the ATP-hydrolyzing subunit KdpB by the formation of a transient KdpB/KdpC/ATP ternary complex. This Bacillus cereus (strain AH820) protein is Potassium-transporting ATPase KdpC subunit.